The primary structure comprises 97 residues: YcgL domain-containing protein PMI1171 (97 aa).

One can recognise a YcgL domain in the interval 3–87 (MICAIYRSTK…PVESMLNAYL (85 aa)).

This is YcgL domain-containing protein PMI1171 from Proteus mirabilis (strain HI4320).